A 965-amino-acid chain; its full sequence is Translation initiation factor IF-2 (965 aa).

Residues 94-375 (RTFVRRDEAA…RGKHQESTTF (282 aa)) are disordered. Residues 104-115 (EQAAEATGNGQE) are compositionally biased toward low complexity. The span at 121-177 (ELQRREEEARHEAELLEKQAQELKARQEQLAREEAERQAREQAAEAERRRAEEEAAK) shows a compositional bias: basic and acidic residues. Residues 181-191 (AAVAEAAAAAR) are compositionally biased toward low complexity. Over residues 192-253 (EQAEQERASQ…KAEAEARAIR (62 aa)) the composition is skewed to basic and acidic residues. Residues 267–276 (PEPPPKPAEA) show a composition bias toward pro residues. A compositionally biased stretch (low complexity) spans 303–320 (KKPAPAAAAQPAATTQPA). Over residues 351–364 (TSGGVDRGWRGGPK) the composition is skewed to gly residues. A tr-type G domain is found at 465 to 634 (PRPPVVTVMG…LLQAEVLELK (170 aa)). The tract at residues 474–481 (GHVDHGKT) is G1. 474 to 481 (GHVDHGKT) provides a ligand contact to GTP. The G2 stretch occupies residues 499–503 (GITQH). Residues 520-523 (DTPG) form a G3 region. GTP is bound by residues 520–524 (DTPGH) and 574–577 (NKID). The tract at residues 574-577 (NKID) is G4. The interval 610 to 612 (SAK) is G5.

It belongs to the TRAFAC class translation factor GTPase superfamily. Classic translation factor GTPase family. IF-2 subfamily.

It is found in the cytoplasm. One of the essential components for the initiation of protein synthesis. Protects formylmethionyl-tRNA from spontaneous hydrolysis and promotes its binding to the 30S ribosomal subunits. Also involved in the hydrolysis of GTP during the formation of the 70S ribosomal complex. This Paraburkholderia phymatum (strain DSM 17167 / CIP 108236 / LMG 21445 / STM815) (Burkholderia phymatum) protein is Translation initiation factor IF-2.